The following is a 249-amino-acid chain: Coproheme decarboxylase (249 aa).

Tyr145 is a catalytic residue. Residues Tyr145 to Arg149 and His172 each bind Fe-coproporphyrin III.

This sequence belongs to the ChdC family. Type 1 subfamily. Requires Fe-coproporphyrin III as cofactor.

The catalysed reaction is Fe-coproporphyrin III + 2 H2O2 + 2 H(+) = heme b + 2 CO2 + 4 H2O. It carries out the reaction Fe-coproporphyrin III + H2O2 + H(+) = harderoheme III + CO2 + 2 H2O. The enzyme catalyses harderoheme III + H2O2 + H(+) = heme b + CO2 + 2 H2O. The protein operates within porphyrin-containing compound metabolism; protoheme biosynthesis. Its function is as follows. Involved in coproporphyrin-dependent heme b biosynthesis. Catalyzes the decarboxylation of Fe-coproporphyrin III (coproheme) to heme b (protoheme IX), the last step of the pathway. The reaction occurs in a stepwise manner with a three-propionate intermediate. The protein is Coproheme decarboxylase of Oceanobacillus iheyensis (strain DSM 14371 / CIP 107618 / JCM 11309 / KCTC 3954 / HTE831).